The following is a 238-amino-acid chain: 2-C-methyl-D-erythritol 4-phosphate cytidylyltransferase (238 aa).

Belongs to the IspD/TarI cytidylyltransferase family. IspD subfamily.

It catalyses the reaction 2-C-methyl-D-erythritol 4-phosphate + CTP + H(+) = 4-CDP-2-C-methyl-D-erythritol + diphosphate. It participates in isoprenoid biosynthesis; isopentenyl diphosphate biosynthesis via DXP pathway; isopentenyl diphosphate from 1-deoxy-D-xylulose 5-phosphate: step 2/6. Functionally, catalyzes the formation of 4-diphosphocytidyl-2-C-methyl-D-erythritol from CTP and 2-C-methyl-D-erythritol 4-phosphate (MEP). The protein is 2-C-methyl-D-erythritol 4-phosphate cytidylyltransferase of Acinetobacter baumannii (strain SDF).